The primary structure comprises 506 residues: Conglutin alpha 1 (506 aa).

Positions 1 to 19 (MANKLLALSLFLLFSGCFA) are cleaved as a signal peptide. Intrachain disulfides connect Cys-31-Cys-64 and Cys-107-Cys-328. A Cupin type-1 1 domain is found at 36–235 (LNALEPDNSV…AFSVDREIVR (200 aa)). Disordered regions lie at residues 111 to 131 (YEEP…RHQK), 195 to 216 (QQKE…NVLS), and 251 to 322 (VKEG…DRNG). The segment covering 195-207 (QQKEGGQGQQQEG) has biased composition (low complexity). The span at 270–280 (EEEEEEEEEEE) shows a compositional bias: acidic residues. The span at 306–315 (QVRRVRRPHH) shows a compositional bias: basic residues. The region spanning 334–483 (HNIGQSTSPD…AFNLDRDQAR (150 aa)) is the Cupin type-1 2 domain. N-linked (GlcNAc...) asparagine glycans are attached at residues Asn-397 and Asn-439.

This sequence belongs to the 11S seed storage protein (globulins) family. Hexamer; each subunit is composed of an acidic and a basic chain derived from a single precursor and linked by a disulfide bond. Component of globulins complexes which accumulate in seeds. Expressed in developing cotyledons and in the embryonic axis of germinating seeds.

Functionally, sulfur-rich seed storage protein. This protein found in the seeds of many leguminous and non-leguminous plants is the source of sulfur-containing amino acids in seed meals. The sequence is that of Conglutin alpha 1 from Lupinus angustifolius (Narrow-leaved blue lupine).